The following is a 183-amino-acid chain: Translation initiation factor IF-3 (183 aa).

Positions 1 to 13 (MKQPDRNQQQGAK) are enriched in polar residues. The interval 1 to 21 (MKQPDRNQQQGAKSNRPAIND) is disordered.

This sequence belongs to the IF-3 family. As to quaternary structure, monomer.

The protein localises to the cytoplasm. Functionally, IF-3 binds to the 30S ribosomal subunit and shifts the equilibrium between 70S ribosomes and their 50S and 30S subunits in favor of the free subunits, thus enhancing the availability of 30S subunits on which protein synthesis initiation begins. The protein is Translation initiation factor IF-3 of Acinetobacter baumannii (strain AYE).